The following is a 494-amino-acid chain: Neuronal acetylcholine receptor subunit alpha-6 (494 aa).

A signal peptide spans 1–25 (MLTSKGQGFLHGGLCLWLCVFTPFF). Residues 26–239 (KGCVGCATEE…ITYSFYIRRL (214 aa)) are Extracellular-facing. N-linked (GlcNAc...) asparagine glycosylation is found at asparagine 54 and asparagine 171. 2 disulfide bridges follow: cysteine 158–cysteine 172 and cysteine 222–cysteine 223. 3 helical membrane passes run 240–264 (PMFYTINLIIPCLFISFLTVLVFYL), 272–290 (VTLCISVLLSLTVFLLVIT), and 306–327 (YLLFTMIFVTLSIVVTVFVLNI). Residues 328 to 465 (HYRTPTTHTM…WKYVAMVVDR (138 aa)) lie on the Cytoplasmic side of the membrane. At serine 401 the chain carries Phosphoserine. A helical transmembrane segment spans residues 466–484 (VFLWVFIIVCVFGTAGLFL).

It belongs to the ligand-gated ion channel (TC 1.A.9) family. Acetylcholine receptor (TC 1.A.9.1) subfamily. Alpha-6/CHRNA6 sub-subfamily. As to quaternary structure, neuronal AChR is composed of two different types of subunits: alpha and non-alpha (beta). CHRNA6/alpha-6 subunit can be combined to CHRNB2/beta-2, CHRNA4/alpha-4 and CHRNB3/beta-3 to give rise to functional receptors. Heteropentamers containing CHRNB3 have an stoichiometry of (CHRNA6:CHRNB2)2:CHRNB3. Interacts with LYPD6.

It is found in the synaptic cell membrane. The enzyme catalyses Ca(2+)(in) = Ca(2+)(out). It carries out the reaction K(+)(in) = K(+)(out). It catalyses the reaction Na(+)(in) = Na(+)(out). Its activity is regulated as follows. Activated by a myriad of ligands such as acetylcholine, cytisine and nicotine. CHRNA6 nAChR activity is inhibited by the antagonists alpha-conotoxin MII and PIA, a small disulfide-constrained peptides from cone snails. Functionally, component of neuronal acetylcholine receptors (nAChRs) that function as pentameric, ligand-gated cation channels with high calcium permeability among other activities. nAChRs are excitatory neurotrasnmitter receptors formed by a collection of nAChR subunits known to mediate synaptic transmission in the nervous system and the neuromuscular junction. Each nAchR subunit confers differential attributes to channel properties, including activation, deactivation and desensitization kinetics, pH sensitivity, cation permeability, and binding to allosteric modulators. CHRNA6 forms pentameric channels with CHRNB2, CHRNB3 and CHRNA4 that exhibit high sensitivity to ACh and nicotine and are predominantly expressed in only a few brain areas, including dopaminergic neurons, norepirephrine neurons and cells of the visual system. nAChrs containing CHRNA6 subunits mediate endogenous cholinergic modulation of dopamine and gamma-aminobutyric acid (GABA) release in response to nicotine at nerve terminals. This chain is Neuronal acetylcholine receptor subunit alpha-6 (CHRNA6), found in Pan troglodytes (Chimpanzee).